Reading from the N-terminus, the 335-residue chain is Interleukin-12 subunit beta (335 aa).

The signal sequence occupies residues 1–22 (MCPQKLTISWFAIVLLVSPLMA). The Ig-like C2-type domain occupies 23–106 (MWELEKDVYV…LSHSHLLLHK (84 aa)). Asparagine 47 carries N-linked (GlcNAc...) asparagine glycosylation. A disulfide bridge connects residues cysteine 50 and cysteine 90. 3 N-linked (GlcNAc...) asparagine glycosylation sites follow: asparagine 122, asparagine 132, and asparagine 220. One can recognise a Fibronectin type-III domain in the interval 233 to 324 (PDPPKNLQMK…QDRYYNSSCS (92 aa)).

This sequence belongs to the IL-12B family. Heterodimer with IL12A; disulfide-linked. The heterodimer is known as interleukin IL-12. Heterodimer with IL23A; disulfide-linked. The heterodimer is known as interleukin IL-23. Also secreted as a monomer. Interacts with NBR1; this interaction promotes IL-12 secretion.

Its subcellular location is the secreted. Its function is as follows. Cytokine that can act as a growth factor for activated T and NK cells, enhance the lytic activity of NK/lymphokine-activated killer cells, and stimulate the production of IFN-gamma by resting PBMC. In terms of biological role, associates with IL23A to form the IL-23 interleukin, a heterodimeric cytokine which functions in innate and adaptive immunity. IL-23 may constitute with IL-17 an acute response to infection in peripheral tissues. IL-23 binds to a heterodimeric receptor complex composed of IL12RB1 and IL23R, activates the Jak-Stat signaling cascade, stimulates memory rather than naive T-cells and promotes production of pro-inflammatory cytokines. IL-23 induces autoimmune inflammation and thus may be responsible for autoimmune inflammatory diseases and may be important for tumorigenesis. The sequence is that of Interleukin-12 subunit beta (Il12b) from Mus musculus (Mouse).